A 361-amino-acid polypeptide reads, in one-letter code: Dual specificity mitogen-activated protein kinase kinase 6 (361 aa).

Composition is skewed to basic and acidic residues over residues 1–11 and 37–48; these read MEGGSDKESKV and PKELKLPKEVFE. The disordered stretch occupies residues 1–61; the sequence is MEGGSDKESK…PAPTPPRDLD (61 aa). The tract at residues 30–46 is d domain; that stretch reads VRGKKKLPKELKLPKEV. The 262-residue stretch at 80–341 folds into the Protein kinase domain; it reads LEQIGELGRG…YTELMQHPFF (262 aa). ATP-binding positions include 86–94 and lysine 109; that span reads LGRGAYGVV. Aspartate 206 acts as the Proton acceptor in catalysis. Phosphoserine; by MAPK3 is present on serine 234. Position 238 is a phosphothreonine; by MAPK3 (threonine 238). The tract at residues 338 to 361 is DVD domain; the sequence is HPFFTLHDSKDTDVASFVKTILGD.

It belongs to the protein kinase superfamily. STE Ser/Thr protein kinase family. MAP kinase kinase subfamily. In terms of assembly, dimer. Interacts (via its D domain) with its MAP kinase substrates. Interacts (via its DVD domain) with MAP3Ks activators. Post-translationally, weakly autophosphorylated. Phosphorylated at Ser-234 and Thr-238 by the majority of M3Ks.

It is found in the nucleus. Its subcellular location is the cytoplasm. It localises to the cytoskeleton. The catalysed reaction is L-seryl-[protein] + ATP = O-phospho-L-seryl-[protein] + ADP + H(+). It carries out the reaction L-threonyl-[protein] + ATP = O-phospho-L-threonyl-[protein] + ADP + H(+). The enzyme catalyses L-tyrosyl-[protein] + ATP = O-phospho-L-tyrosyl-[protein] + ADP + H(+). Its activity is regulated as follows. Activated by dual phosphorylation on Ser-234 and Thr-238 in response to a variety of cellular stresses, including UV radiation, osmotic shock, hypoxia, inflammatory cytokines, interferon gamma (IFNG), and less often by growth factors. MAP2K6/MKK6 is activated by the majority of M3Ks. Dual specificity protein kinase which acts as an essential component of the MAP kinase signal transduction pathway. Catalyzes the concomitant phosphorylation of a threonine and a tyrosine residue in the MAP kinases p38 and plays an important role in the regulation of cellular responses to cytokines and all kinds of stresses. The p38 MAP kinase signal transduction pathway leads to direct activation of transcription factors. Phosphorylation by MAP2K6 asymmetrically activates p38 on one side of the blastodisc, an event which is necessary for blastomere cleavage. The polypeptide is Dual specificity mitogen-activated protein kinase kinase 6 (Danio rerio (Zebrafish)).